Reading from the N-terminus, the 403-residue chain is MASLGLSFPPAAKTPTYLASSSSTFFSNSSLSVRTSQFRSRNSVFACVKCDMPESLNVGNGNPSIPIINERTLPKFLESARMEKSVNRTNTRLKLFSGTANPALAQEIAWYMGLDLGKVNIKRFADGEIYVQLQESVRGCDVYLVQPTCTPTNENLMELLIMVDACRRASAKKVTAVIPYFGYARADRKTQGRESIAAKLVANLITEAGADRVLACDLHSGQSMGYFDIPVDHVYCQPVILDYLASKSIPSEDLVVVSPDVGGVARARAFAKKLSDAPLAIVDKRRSGHNVAEVMNLIGDVRGKVAIMVDDMIDTAGTIVKGAALLHQEGAREVYACCTHAVFSPPAIERLSGGLLQEVIVTNTLPVAEKNYFPQLTILSVANLLGETIWRVHDDSSVSSIFL.

The transit peptide at 1–49 (MASLGLSFPPAAKTPTYLASSSSTFFSNSSLSVRTSQFRSRNSVFACVK) directs the protein to the chloroplast. Residues Asp-217, His-219, Asp-228, and Asp-232 each contribute to the Mg(2+) site. Residues 303–318 (GKVAIMVDDMIDTAGT) are binding of phosphoribosylpyrophosphate.

The protein belongs to the ribose-phosphate pyrophosphokinase family. Requires Mg(2+) as cofactor.

The protein localises to the plastid. It is found in the chloroplast. It catalyses the reaction D-ribose 5-phosphate + ATP = 5-phospho-alpha-D-ribose 1-diphosphate + AMP + H(+). In Arabidopsis thaliana (Mouse-ear cress), this protein is Ribose-phosphate pyrophosphokinase 1, chloroplastic (PRS1).